The chain runs to 538 residues: Chaperonin GroEL 1 (538 aa).

ATP contacts are provided by residues 29–32 (TLGP), 86–90 (DGTTT), glycine 413, 478–480 (NAA), and aspartate 494.

This sequence belongs to the chaperonin (HSP60) family. As to quaternary structure, forms a cylinder of 14 subunits composed of two heptameric rings stacked back-to-back. Interacts with the co-chaperonin GroES.

The protein localises to the cytoplasm. It catalyses the reaction ATP + H2O + a folded polypeptide = ADP + phosphate + an unfolded polypeptide.. In terms of biological role, together with its co-chaperonin GroES, plays an essential role in assisting protein folding. The GroEL-GroES system forms a nano-cage that allows encapsulation of the non-native substrate proteins and provides a physical environment optimized to promote and accelerate protein folding. In Corynebacterium glutamicum (strain R), this protein is Chaperonin GroEL 1.